Consider the following 193-residue polypeptide: MNFLAHLHLATLADSSLLGNLMADFVRGNPQGSYADEIVAGIRLHRRVDSLTDSLPEVKQARQYFSDEFRRVSPITLDVLWDHYLARHWLQLVPDTPLQTFIDGAQSQIEPNLAQTPERFQNLNLYLWPERWMTRYAELPFIADVLHRMSVRRPKLAALSGSFQDIEQHYHQFEILFWQFYPRMMQLAKTQQL.

Belongs to the AcpH family.

It carries out the reaction holo-[ACP] + H2O = apo-[ACP] + (R)-4'-phosphopantetheine + H(+). In terms of biological role, converts holo-ACP to apo-ACP by hydrolytic cleavage of the phosphopantetheine prosthetic group from ACP. This chain is Acyl carrier protein phosphodiesterase, found in Pectobacterium atrosepticum (strain SCRI 1043 / ATCC BAA-672) (Erwinia carotovora subsp. atroseptica).